The following is a 611-amino-acid chain: Putative type II restriction enzyme HgiDII (611 aa).

The span at 355–364 shows a compositional bias: basic and acidic residues; it reads YPSNPKKEEV. A disordered region spans residues 355-434; it reads YPSNPKKEEV…PEPSPPPKQE (80 aa). A compositionally biased stretch (low complexity) spans 381–409; the sequence is TNASSDSSTATENASSDSSTATENASSET. Repeat copies occupy residues 382-392 and 393-403. The tract at residues 382–403 is 2.5 X 11 AA tandem repeats; the sequence is NASSDSSTATENASSDSSTATE. A 3; truncated repeat occupies 404 to 409; it reads NASSET. The span at 410 to 425 shows a compositional bias: acidic residues; sequence NDGEVEDNSFFDDDIP.

The enzyme catalyses Endonucleolytic cleavage of DNA to give specific double-stranded fragments with terminal 5'-phosphates.. According to REBASE this is a P subtype restriction enzyme that recognizes the double-stranded sequence 5'-GTCGAC-3' and cleaves after G-1. No restriction activity was detected upon overexpressing this protein in E.coli. This is Putative type II restriction enzyme HgiDII from Herpetosiphon aurantiacus (Herpetosiphon giganteus).